The chain runs to 303 residues: Cysteine synthase B (303 aa).

N6-(pyridoxal phosphate)lysine is present on Lys41. Residues Asn71, 174 to 178 (GTTGT), and Ser255 contribute to the pyridoxal 5'-phosphate site.

It belongs to the cysteine synthase/cystathionine beta-synthase family. Homodimer. It depends on pyridoxal 5'-phosphate as a cofactor.

The enzyme catalyses O-acetyl-L-serine + hydrogen sulfide = L-cysteine + acetate. The protein operates within amino-acid biosynthesis; L-cysteine biosynthesis; L-cysteine from L-serine: step 2/2. Two cysteine synthase enzymes are found. Both catalyze the same reaction. Cysteine synthase B can also use thiosulfate in place of sulfide to give cysteine thiosulfonate as a product. The sequence is that of Cysteine synthase B (cysM) from Escherichia coli (strain K12).